The sequence spans 151 residues: Globin CTT-VIII (151 aa).

The region spanning Pro-4–Glu-148 is the Globin domain. Heme b contacts are provided by His-62 and His-97.

This sequence belongs to the globin family. Homodimer.

This chain is Globin CTT-VIII (CTT-8), found in Chironomus thummi thummi (Midge).